Here is a 571-residue protein sequence, read N- to C-terminus: Urease subunit alpha (571 aa).

A Urease domain is found at 134–571; it reads GAIDTHIHFI…LPMAQRYFLF (438 aa). His-139, His-141, and Lys-222 together coordinate Ni(2+). At Lys-222 the chain carries N6-carboxylysine. His-224 lines the substrate pocket. Ni(2+)-binding residues include His-251 and His-277. The active-site Proton donor is the His-325. Position 365 (Asp-365) interacts with Ni(2+).

It belongs to the metallo-dependent hydrolases superfamily. Urease alpha subunit family. Heterotrimer of UreA (gamma), UreB (beta) and UreC (alpha) subunits. Three heterotrimers associate to form the active enzyme. Ni cation serves as cofactor. In terms of processing, carboxylation allows a single lysine to coordinate two nickel ions.

It is found in the cytoplasm. It carries out the reaction urea + 2 H2O + H(+) = hydrogencarbonate + 2 NH4(+). Its pathway is nitrogen metabolism; urea degradation; CO(2) and NH(3) from urea (urease route): step 1/1. This Bordetella pertussis (strain Tohama I / ATCC BAA-589 / NCTC 13251) protein is Urease subunit alpha.